The primary structure comprises 103 residues: Pyrimidine/purine nucleoside phosphorylase (103 aa).

It belongs to the nucleoside phosphorylase PpnP family.

It carries out the reaction a purine D-ribonucleoside + phosphate = a purine nucleobase + alpha-D-ribose 1-phosphate. The enzyme catalyses adenosine + phosphate = alpha-D-ribose 1-phosphate + adenine. The catalysed reaction is cytidine + phosphate = cytosine + alpha-D-ribose 1-phosphate. It catalyses the reaction guanosine + phosphate = alpha-D-ribose 1-phosphate + guanine. It carries out the reaction inosine + phosphate = alpha-D-ribose 1-phosphate + hypoxanthine. The enzyme catalyses thymidine + phosphate = 2-deoxy-alpha-D-ribose 1-phosphate + thymine. The catalysed reaction is uridine + phosphate = alpha-D-ribose 1-phosphate + uracil. It catalyses the reaction xanthosine + phosphate = alpha-D-ribose 1-phosphate + xanthine. Functionally, catalyzes the phosphorolysis of diverse nucleosides, yielding D-ribose 1-phosphate and the respective free bases. Can use uridine, adenosine, guanosine, cytidine, thymidine, inosine and xanthosine as substrates. Also catalyzes the reverse reactions. This chain is Pyrimidine/purine nucleoside phosphorylase, found in Shewanella putrefaciens (strain CN-32 / ATCC BAA-453).